We begin with the raw amino-acid sequence, 215 residues long: MVLRSEILTKKSELPTPDQALPGRESAMPVPEAHFVNGRPLTAPFPAGLQQVLFGMGCFWGAERRLWQQPGVWVTAVGYAGGYTPNPTYDEVCSGLTGHSEVVLVVYNPQETSFEQLLKVFWEAHDPTQGMRQGGDIGTQYRSVIYTFDAAQKAAALASRESFQAELAKAGYDRITTEIADVPPFYYAEAYHQQYLAKNPNGYCGLGGTGVCLPA.

Cysteine 58 is an active-site residue.

The protein belongs to the MsrA Met sulfoxide reductase family.

It carries out the reaction L-methionyl-[protein] + [thioredoxin]-disulfide + H2O = L-methionyl-(S)-S-oxide-[protein] + [thioredoxin]-dithiol. It catalyses the reaction [thioredoxin]-disulfide + L-methionine + H2O = L-methionine (S)-S-oxide + [thioredoxin]-dithiol. In terms of biological role, has an important function as a repair enzyme for proteins that have been inactivated by oxidation. Catalyzes the reversible oxidation-reduction of methionine sulfoxide in proteins to methionine. The polypeptide is Peptide methionine sulfoxide reductase MsrA (Pseudomonas aeruginosa (strain LESB58)).